A 621-amino-acid polypeptide reads, in one-letter code: ATP-dependent lipid A-core flippase (621 aa).

5 consecutive transmembrane segments (helical) span residues 32–52, 91–111, 192–212, 286–306, and 312–332; these read IVAALIAIFGVAATESYLAAF, VWGTENKIWTVPLFLIILVVI, IVLLYLNWQLSLIVVLMFPLL, SPFSELIASIALAVVIFIALW, and YTTIGEFMAFIVAMLQMYAPI. Residues 33-344 form the ABC transmembrane type-1 domain; the sequence is VAALIAIFGV…LANISIPMQT (312 aa). Positions 378-611 constitute an ABC transporter domain; it reads FRNVDVEYRS…NGYYTMLRNI (234 aa). ATP is bound at residue 410–417; the sequence is GRSGSGKS.

This sequence belongs to the ABC transporter superfamily. Lipid exporter (TC 3.A.1.106) family. In terms of assembly, homodimer.

It localises to the cell inner membrane. The enzyme catalyses ATP + H2O + lipid A-core oligosaccharideSide 1 = ADP + phosphate + lipid A-core oligosaccharideSide 2.. Involved in lipopolysaccharide (LPS) biosynthesis. Translocates lipid A-core from the inner to the outer leaflet of the inner membrane. Transmembrane domains (TMD) form a pore in the inner membrane and the ATP-binding domain (NBD) is responsible for energy generation. The sequence is that of ATP-dependent lipid A-core flippase from Neisseria meningitidis serogroup A / serotype 4A (strain DSM 15465 / Z2491).